The sequence spans 782 residues: DNA repair and recombination protein RAD54-like (782 aa).

A compositionally biased stretch (polar residues) spans 1 to 20 (MRRSLAPSQRGGQRLSSRND). Residues 1–28 (MRRSLAPSQRGGQRLSSRNDFTPPLLKK) form a disordered region. Positions 2–9 (RRSLAPSQ) are required for chromatin remodeling, strand pairing activities and coupling of ATPase activity. Threonine 22 carries the post-translational modification Phosphothreonine. Residues 168–343 (EGKRGNFNGC…FSLVNFVNPE (176 aa)) form the Helicase ATP-binding domain. 181–188 (DEMGLGKT) provides a ligand contact to ATP. The short motif at 294 to 297 (DEGH) is the DEGH box element. Residues 501–658 (LLDFMLAAIR…NNESAEKHFT (158 aa)) enclose the Helicase C-terminal domain. Polar residues predominate over residues 741–753 (SQKIEATPATETS). A disordered region spans residues 741-782 (SQKIEATPATETSVEAKLEPERRKRPAMPLSDDSADEDFQGF). Residues 773 to 782 (DSADEDFQGF) are compositionally biased toward acidic residues.

It belongs to the SNF2/RAD54 helicase family. In terms of assembly, interacts (via N-terminus) with spn-A/Rad51.

The protein resides in the nucleus. Functionally, involved in mitotic DNA repair and meiotic recombination. Functions in the recombinational DNA repair pathway. Essential for interhomolog gene conversion (GC), but may have a less important role in intersister GC than spn-A/Rad51. In the presence of DNA, spn-A/Rad51 enhances the ATPase activity of okr/Rad54. The polypeptide is DNA repair and recombination protein RAD54-like (Drosophila persimilis (Fruit fly)).